A 520-amino-acid polypeptide reads, in one-letter code: Kelch domain-containing protein 4 (520 aa).

A compositionally biased stretch (basic residues) spans methionine 1 to lysine 10. Positions methionine 1 to glutamate 33 are disordered. The span at glycine 11–lysine 24 shows a compositional bias: basic and acidic residues. 5 Kelch repeats span residues glutamate 77–glutamine 129, glutamine 133–arginine 187, glutamine 188–glutamine 241, glycine 243–serine 289, and glutamine 308–arginine 361. 3 disordered regions span residues glutamine 346–glutamine 379, leucine 402–proline 431, and aspartate 481–aspartate 520. A phosphoserine mark is found at serine 413 and serine 418. A Kelch 6 repeat occupies valine 443 to glutamate 494.

The sequence is that of Kelch domain-containing protein 4 (KLHDC4) from Homo sapiens (Human).